A 156-amino-acid chain; its full sequence is Ribosomal RNA large subunit methyltransferase H (156 aa).

S-adenosyl-L-methionine is bound by residues L73, G104, and 123–128; that span reads LSALTL.

The protein belongs to the RNA methyltransferase RlmH family. As to quaternary structure, homodimer.

The protein localises to the cytoplasm. It carries out the reaction pseudouridine(1915) in 23S rRNA + S-adenosyl-L-methionine = N(3)-methylpseudouridine(1915) in 23S rRNA + S-adenosyl-L-homocysteine + H(+). Specifically methylates the pseudouridine at position 1915 (m3Psi1915) in 23S rRNA. In Shewanella denitrificans (strain OS217 / ATCC BAA-1090 / DSM 15013), this protein is Ribosomal RNA large subunit methyltransferase H.